We begin with the raw amino-acid sequence, 389 residues long: Nicotinate phosphoribosyltransferase (389 aa).

His216 carries the post-translational modification Phosphohistidine; by autocatalysis.

Belongs to the NAPRTase family. In terms of processing, transiently phosphorylated on a His residue during the reaction cycle. Phosphorylation strongly increases the affinity for substrates and increases the rate of nicotinate D-ribonucleotide production. Dephosphorylation regenerates the low-affinity form of the enzyme, leading to product release.

It catalyses the reaction nicotinate + 5-phospho-alpha-D-ribose 1-diphosphate + ATP + H2O = nicotinate beta-D-ribonucleotide + ADP + phosphate + diphosphate. Its pathway is cofactor biosynthesis; NAD(+) biosynthesis; nicotinate D-ribonucleotide from nicotinate: step 1/1. Its function is as follows. Catalyzes the synthesis of beta-nicotinate D-ribonucleotide from nicotinate and 5-phospho-D-ribose 1-phosphate at the expense of ATP. The chain is Nicotinate phosphoribosyltransferase from Ralstonia nicotianae (strain ATCC BAA-1114 / GMI1000) (Ralstonia solanacearum).